A 404-amino-acid chain; its full sequence is 26S proteasome regulatory subunit 6A-B (404 aa).

Position 192–199 (192–199 (GPPGTGKT)) interacts with ATP.

This sequence belongs to the AAA ATPase family. In terms of assembly, may form a heterodimer with a related family member.

It localises to the cytoplasm. The protein resides in the nucleus. Functionally, the 26S proteasome is involved in the ATP-dependent degradation of ubiquitinated proteins. The regulatory (or ATPase) complex confers ATP dependency and substrate specificity to the 26S complex. The sequence is that of 26S proteasome regulatory subunit 6A-B (psmc3-b) from Xenopus laevis (African clawed frog).